A 136-amino-acid chain; its full sequence is MARVTVEDCIEKVENRFELVLLASHRARLLAAGAPLTIDRDRDKNPVVALREIGDETITADDLKEQLIHSMQKYVEVDEPEAETVPLLSSSPAAAAVAPQSSSDDAAVQFDRMSEEDLLRGLENLAPPVETDDEGE.

A disordered region spans residues 79–107 (EPEAETVPLLSSSPAAAAVAPQSSSDDAA). Low complexity predominate over residues 89 to 107 (SSSPAAAAVAPQSSSDDAA).

Belongs to the RNA polymerase subunit omega family. In terms of assembly, the RNAP catalytic core consists of 2 alpha, 1 beta, 1 beta' and 1 omega subunit. When a sigma factor is associated with the core the holoenzyme is formed, which can initiate transcription.

It carries out the reaction RNA(n) + a ribonucleoside 5'-triphosphate = RNA(n+1) + diphosphate. Its function is as follows. Promotes RNA polymerase assembly. Latches the N- and C-terminal regions of the beta' subunit thereby facilitating its interaction with the beta and alpha subunits. The polypeptide is DNA-directed RNA polymerase subunit omega (Methylobacterium radiotolerans (strain ATCC 27329 / DSM 1819 / JCM 2831 / NBRC 15690 / NCIMB 10815 / 0-1)).